A 277-amino-acid chain; its full sequence is 4-hydroxy-3-methylbut-2-enyl diphosphate reductase (277 aa).

[4Fe-4S] cluster is bound at residue Cys12. Positions 36 and 70 each coordinate (2E)-4-hydroxy-3-methylbut-2-enyl diphosphate. 2 residues coordinate dimethylallyl diphosphate: His36 and His70. His36 and His70 together coordinate isopentenyl diphosphate. Residue Cys92 participates in [4Fe-4S] cluster binding. (2E)-4-hydroxy-3-methylbut-2-enyl diphosphate is bound at residue His120. His120 is a binding site for dimethylallyl diphosphate. An isopentenyl diphosphate-binding site is contributed by His120. The Proton donor role is filled by Glu122. Residue Thr160 coordinates (2E)-4-hydroxy-3-methylbut-2-enyl diphosphate. Cys188 contributes to the [4Fe-4S] cluster binding site. (2E)-4-hydroxy-3-methylbut-2-enyl diphosphate contacts are provided by Ser216, Ser217, Asn218, and Ser260. Residues Ser216, Ser217, Asn218, and Ser260 each contribute to the dimethylallyl diphosphate site. Ser216, Ser217, Asn218, and Ser260 together coordinate isopentenyl diphosphate.

Belongs to the IspH family. [4Fe-4S] cluster is required as a cofactor.

It carries out the reaction isopentenyl diphosphate + 2 oxidized [2Fe-2S]-[ferredoxin] + H2O = (2E)-4-hydroxy-3-methylbut-2-enyl diphosphate + 2 reduced [2Fe-2S]-[ferredoxin] + 2 H(+). The catalysed reaction is dimethylallyl diphosphate + 2 oxidized [2Fe-2S]-[ferredoxin] + H2O = (2E)-4-hydroxy-3-methylbut-2-enyl diphosphate + 2 reduced [2Fe-2S]-[ferredoxin] + 2 H(+). It participates in isoprenoid biosynthesis; dimethylallyl diphosphate biosynthesis; dimethylallyl diphosphate from (2E)-4-hydroxy-3-methylbutenyl diphosphate: step 1/1. Its pathway is isoprenoid biosynthesis; isopentenyl diphosphate biosynthesis via DXP pathway; isopentenyl diphosphate from 1-deoxy-D-xylulose 5-phosphate: step 6/6. Catalyzes the conversion of 1-hydroxy-2-methyl-2-(E)-butenyl 4-diphosphate (HMBPP) into a mixture of isopentenyl diphosphate (IPP) and dimethylallyl diphosphate (DMAPP). Acts in the terminal step of the DOXP/MEP pathway for isoprenoid precursor biosynthesis. The polypeptide is 4-hydroxy-3-methylbut-2-enyl diphosphate reductase (Sulfurovum sp. (strain NBC37-1)).